A 953-amino-acid polypeptide reads, in one-letter code: Translation initiation factor IF-2 (953 aa).

The tract at residues Gly55–Tyr340 is disordered. A compositionally biased stretch (low complexity) spans Lys81–Ala93. Positions Pro110–Lys119 are enriched in pro residues. Low complexity-rich tracts occupy residues Ser123–Lys133 and Lys143–Pro160. The segment covering Pro202 to Gly219 has biased composition (gly residues). The segment covering Gln233–Gln248 has biased composition (low complexity). A compositionally biased stretch (gly residues) spans Asn280–Gly323. The span at Arg327–Lys336 shows a compositional bias: basic residues. Positions Lys449–Asp621 constitute a tr-type G domain. Positions Gly458–Thr465 are G1. Gly458–Thr465 provides a ligand contact to GTP. A G2 region spans residues Gly483–Gly487. The interval Asp508–Gly511 is G3. Residues Asp508 to His512 and Asn562 to Asp565 each bind GTP. Residues Asn562 to Asp565 form a G4 region. Residues Ser598–Lys600 form a G5 region.

It belongs to the TRAFAC class translation factor GTPase superfamily. Classic translation factor GTPase family. IF-2 subfamily.

Its subcellular location is the cytoplasm. Its function is as follows. One of the essential components for the initiation of protein synthesis. Protects formylmethionyl-tRNA from spontaneous hydrolysis and promotes its binding to the 30S ribosomal subunits. Also involved in the hydrolysis of GTP during the formation of the 70S ribosomal complex. The sequence is that of Translation initiation factor IF-2 from Corynebacterium diphtheriae (strain ATCC 700971 / NCTC 13129 / Biotype gravis).